We begin with the raw amino-acid sequence, 457 residues long: uncharacterized protein (457 aa).

12 helical membrane-spanning segments follow: residues 18 to 38 (VMTV…PYLV), 44 to 64 (GAYV…MILV), 101 to 121 (MGLL…GWVI), 158 to 178 (IIFY…KGII), 188 to 208 (LMPL…TLPG), 228 to 248 (LFIF…GVLI), 273 to 293 (IIAV…GIEP), 294 to 314 (NAGP…LWAG), 316 to 336 (FFAI…SITI), 355 to 375 (AIVL…ILGD), 396 to 416 (SGNI…GFVL), and 433 to 453 (IKIW…VIFI).

This sequence belongs to the sodium:neurotransmitter symporter (SNF) (TC 2.A.22) family.

The protein resides in the cell membrane. Functionally, putative sodium-dependent transporter. This is an uncharacterized protein from Haemophilus influenzae (strain ATCC 51907 / DSM 11121 / KW20 / Rd).